A 642-amino-acid polypeptide reads, in one-letter code: Zinc finger protein 14 (642 aa).

A KRAB domain is found at 4-76 (VSFEDVAVNF…MVERLCESRR (73 aa)). A C2H2-type 1 zinc finger spans residues 103 to 125 (HECSFCGRDFIHHSSLNRHMRSH). The C2H2-type 2; degenerate zinc-finger motif lies at 141-163 (CKCKAVGKTFSYHHCFRKHERTH). The segment at 169–191 (YECKQCGKAFIYYQPFQRHERTH) adopts a C2H2-type 3 zinc-finger fold. The C2H2-type 4; atypical zinc finger occupies 197-217 (YECKQCGKTFIYYQSFQKHAH). C2H2-type zinc fingers lie at residues 223-245 (YECKQCGKAFICYQSFQRHKRTH), 251-273 (YECKQCGKAFSCPTYFRTHERTH), 279-301 (YKCKECGKAFSFLSSFRRHKRTH), 307-329 (YECKECGKAFFYSASFRAHVIIH), 335-357 (YKCKECGKAFNSSNSCRVHERTH), 363-385 (YECKRCGKSFSWSISLRLHERTH), 391-413 (YECKQCHKTFSFSSSLREHETTH), 419-441 (YECKQCGKTFSFSSSLQRHERTH), 447-469 (YECKQCGKAFRCSSYFRIHERSH), 475-497 (YECKQCGKVFIRSSSFRLHERTH), 503-525 (YECKLCGKTFSFSSSLREHEKIH), 531-553 (FECKQCGKAFLRSSQIRLHERTH), 559-581 (YQCKQCGKAFISSSKFRMHERTH), 587-609 (YRCKQCGKAFRFSSSVRIHERSH), and 615-637 (YECKQCGKAFISSSHFRLHERTH).

This sequence belongs to the krueppel C2H2-type zinc-finger protein family.

Its subcellular location is the nucleus. Its function is as follows. May be involved in transcriptional regulation. The polypeptide is Zinc finger protein 14 (ZNF14) (Homo sapiens (Human)).